The chain runs to 489 residues: MSEPSAAVGQRPGGESAPAHRLWGGRFTAGPAESVAALSRSIDVDWRLARYDLRASKAHARVLAAAGLLDADELAQLLAALDELDRACASGTFQPAAADEDVHTALERALLERLGPLGGKLRAGRSRNDQIATDLRLYLRDHVRLLVRRLVDLQWALVDQAERHLDLPAPGMTHLQHAQPVLFAHHLLAHVAAFARDVDRFRDWDRRAAICPLGAGALAGSSLPLDPHAVAAELGFTAPAANSIDAVSDRDFAAEFAFAAALVGVHLSRLGEEIVLWCSQEFGWVELDDAYATGSSIMPQKKNPDVAELARGKAGRLIGNLTSLLTMLKGLPLAYDRDLQEDKFPVFDSLDTLLLVLPAMTGLVATMRVKADRVAAAAPAGFSLATDVAEALVRRGVPFHEAHQAVGRLVAWCAAHGTDLSAVDDDQLAEISPYFTPENRAEVRTVLSVRGAIGARAAYGGTAPERVAEQLAAVRAALADSAAWADAAP.

The tract at residues 1–20 is disordered; sequence MSEPSAAVGQRPGGESAPAH.

This sequence belongs to the lyase 1 family. Argininosuccinate lyase subfamily.

The protein resides in the cytoplasm. It catalyses the reaction 2-(N(omega)-L-arginino)succinate = fumarate + L-arginine. The protein operates within amino-acid biosynthesis; L-arginine biosynthesis; L-arginine from L-ornithine and carbamoyl phosphate: step 3/3. The polypeptide is Argininosuccinate lyase (Acidothermus cellulolyticus (strain ATCC 43068 / DSM 8971 / 11B)).